The following is a 209-amino-acid chain: Ribosomal RNA large subunit methyltransferase E (209 aa).

Positions 63, 65, 83, 99, and 124 each coordinate S-adenosyl-L-methionine. The active-site Proton acceptor is the K164.

The protein belongs to the class I-like SAM-binding methyltransferase superfamily. RNA methyltransferase RlmE family.

The protein localises to the cytoplasm. It catalyses the reaction uridine(2552) in 23S rRNA + S-adenosyl-L-methionine = 2'-O-methyluridine(2552) in 23S rRNA + S-adenosyl-L-homocysteine + H(+). In terms of biological role, specifically methylates the uridine in position 2552 of 23S rRNA at the 2'-O position of the ribose in the fully assembled 50S ribosomal subunit. The sequence is that of Ribosomal RNA large subunit methyltransferase E from Shewanella denitrificans (strain OS217 / ATCC BAA-1090 / DSM 15013).